The sequence spans 134 residues: ATP synthase epsilon chain (134 aa).

Belongs to the ATPase epsilon chain family. As to quaternary structure, F-type ATPases have 2 components, CF(1) - the catalytic core - and CF(0) - the membrane proton channel. CF(1) has five subunits: alpha(3), beta(3), gamma(1), delta(1), epsilon(1). CF(0) has three main subunits: a, b and c.

The protein localises to the cellular thylakoid membrane. Its function is as follows. Produces ATP from ADP in the presence of a proton gradient across the membrane. This is ATP synthase epsilon chain from Prochlorococcus marinus (strain MIT 9301).